The primary structure comprises 690 residues: Elongation factor G (690 aa).

In terms of domain architecture, tr-type G spans 8–283 (EDYRNFGIMA…AVVDYLPSPV (276 aa)). GTP contacts are provided by residues 17–24 (AHIDAGKT), 81–85 (DTPGH), and 135–138 (NKMD).

The protein belongs to the TRAFAC class translation factor GTPase superfamily. Classic translation factor GTPase family. EF-G/EF-2 subfamily.

The protein localises to the cytoplasm. Catalyzes the GTP-dependent ribosomal translocation step during translation elongation. During this step, the ribosome changes from the pre-translocational (PRE) to the post-translocational (POST) state as the newly formed A-site-bound peptidyl-tRNA and P-site-bound deacylated tRNA move to the P and E sites, respectively. Catalyzes the coordinated movement of the two tRNA molecules, the mRNA and conformational changes in the ribosome. The polypeptide is Elongation factor G (Rhodopseudomonas palustris (strain HaA2)).